We begin with the raw amino-acid sequence, 1199 residues long: DNA polymerase beta (1199 aa).

This sequence belongs to the DNA polymerase type-B family.

It catalyses the reaction DNA(n) + a 2'-deoxyribonucleoside 5'-triphosphate = DNA(n+1) + diphosphate. DNA-directed DNA polymerase involved in viral DNA replication. The chain is DNA polymerase beta from Ornithodoros (relapsing fever ticks).